The sequence spans 705 residues: Translation initiation factor IF-2 (705 aa).

The segment at 40–124 (DDQIKALDKK…QPAAPKEIPS (85 aa)) is disordered. Basic and acidic residues predominate over residues 41–58 (DQIKALDKKFKKEQKNDN). A compositionally biased stretch (low complexity) spans 59–77 (KQSTQNNHQKSNNQNQNKG). The span at 94–108 (KGNKKNNRNNKKNNK) shows a compositional bias: basic residues. In terms of domain architecture, tr-type G spans 207–376 (ERPAVVTIMG…GLVAEVQELK (170 aa)). Positions 216–223 (GHVDHGKT) are G1. Position 216-223 (216-223 (GHVDHGKT)) interacts with GTP. The G2 stretch occupies residues 241–245 (GITQH). The interval 262-265 (DTPG) is G3. GTP-binding positions include 262–266 (DTPGH) and 316–319 (NKID). Residues 316–319 (NKID) form a G4 region. The G5 stretch occupies residues 352–354 (SAL).

This sequence belongs to the TRAFAC class translation factor GTPase superfamily. Classic translation factor GTPase family. IF-2 subfamily.

The protein localises to the cytoplasm. In terms of biological role, one of the essential components for the initiation of protein synthesis. Protects formylmethionyl-tRNA from spontaneous hydrolysis and promotes its binding to the 30S ribosomal subunits. Also involved in the hydrolysis of GTP during the formation of the 70S ribosomal complex. This Staphylococcus aureus (strain MRSA252) protein is Translation initiation factor IF-2.